We begin with the raw amino-acid sequence, 280 residues long: Ribosomal protein L11 methyltransferase (280 aa).

Positions 131, 152, 174, and 217 each coordinate S-adenosyl-L-methionine.

This sequence belongs to the methyltransferase superfamily. PrmA family.

The protein resides in the cytoplasm. The enzyme catalyses L-lysyl-[protein] + 3 S-adenosyl-L-methionine = N(6),N(6),N(6)-trimethyl-L-lysyl-[protein] + 3 S-adenosyl-L-homocysteine + 3 H(+). Functionally, methylates ribosomal protein L11. The sequence is that of Ribosomal protein L11 methyltransferase from Bacteroides fragilis (strain ATCC 25285 / DSM 2151 / CCUG 4856 / JCM 11019 / LMG 10263 / NCTC 9343 / Onslow / VPI 2553 / EN-2).